The following is a 727-amino-acid chain: Protein edg-1 (727 aa).

A disordered region spans residues 703–727; the sequence is FAESSVKPTTSSAYGNSSNFSRYAD.

In terms of assembly, may interact with deps-1 and prg-1.

Its subcellular location is the cytoplasmic granule. Its function is as follows. Plays a role in regulating deps-1 cluster formation in the germline. This Caenorhabditis elegans protein is Protein edg-1.